Consider the following 360-residue polypeptide: Phospho-N-acetylmuramoyl-pentapeptide-transferase (360 aa).

10 helical membrane passes run 26–46, 74–94, 97–117, 134–154, 168–188, 199–219, 236–256, 263–283, 288–308, and 338–358; these read AILGLLTALVFSLWFGPKLIE, MGGLLILAAIFISVLLWGDLG, YVWVMLFVLGSFGLIGFIDDY, YILQSLAALLIAFFLYATAAN, VMPQLGAVFIVLAYFTIVGSS, GLAIMPTVMVAAAFALIAYLS, SGELVIVCTAIVGAGLGFLWF, VFMGDVGSLSLGAALGTIAVL, ILLVIMGGVFVMETLSVILQV, and VIVRFWIISIFLVLLGLATLK.

Belongs to the glycosyltransferase 4 family. MraY subfamily. Mg(2+) is required as a cofactor.

The protein localises to the cell inner membrane. The catalysed reaction is UDP-N-acetyl-alpha-D-muramoyl-L-alanyl-gamma-D-glutamyl-meso-2,6-diaminopimeloyl-D-alanyl-D-alanine + di-trans,octa-cis-undecaprenyl phosphate = di-trans,octa-cis-undecaprenyl diphospho-N-acetyl-alpha-D-muramoyl-L-alanyl-D-glutamyl-meso-2,6-diaminopimeloyl-D-alanyl-D-alanine + UMP. It participates in cell wall biogenesis; peptidoglycan biosynthesis. Catalyzes the initial step of the lipid cycle reactions in the biosynthesis of the cell wall peptidoglycan: transfers peptidoglycan precursor phospho-MurNAc-pentapeptide from UDP-MurNAc-pentapeptide onto the lipid carrier undecaprenyl phosphate, yielding undecaprenyl-pyrophosphoryl-MurNAc-pentapeptide, known as lipid I. This chain is Phospho-N-acetylmuramoyl-pentapeptide-transferase, found in Shewanella baltica (strain OS195).